The following is a 56-amino-acid chain: Pituitary adenylate cyclase-activating polypeptide (56 aa).

The segment at 42 to 50 (VKKYLAAVL) is important for receptor binding. A Leucine amide modification is found at leucine 50.

It belongs to the glucagon family. As to quaternary structure, interacts with ADCYAP1R1 (via N-terminal extracellular domain).

Its subcellular location is the secreted. PACAP is a neuropeptide involved in diverse array of physiological processes through activating the PACAP subfamily of class B1 G protein-coupled receptors: VIP receptor 1 (VIPR1), VIP receptor 2 (VIPR2), and PACAP type I receptor (ADCYAP1R1). Exerts neuroprotective and general cytoprotective effects due to anti-apoptotic, anti-inflammatory, and antioxidant actions. This is Pituitary adenylate cyclase-activating polypeptide (Adcyap1) from Heloderma suspectum (Gila monster).